The primary structure comprises 120 residues: UPF0344 protein lmo2265 (120 aa).

4 helical membrane passes run 3-23 (GYIH…ALLI), 33-53 (MLQM…IMMV), 62-82 (ILAI…EMLL), and 92-112 (GMFL…GFYL).

It belongs to the UPF0344 family.

Its subcellular location is the cell membrane. This is UPF0344 protein lmo2265 from Listeria monocytogenes serovar 1/2a (strain ATCC BAA-679 / EGD-e).